Here is an 88-residue protein sequence, read N- to C-terminus: FXYD domain-containing ion transport regulator 3 (88 aa).

The signal sequence occupies residues 1 to 20; the sequence is MQEFALSLLVLLAGLPTLDA. The Extracellular portion of the chain corresponds to 21–38; that stretch reads NDPEDKDSPFYYDWHSLR. A helical transmembrane segment spans residues 39 to 59; that stretch reads VGGLICAGILCALGIIVLMSG. Residues 60–88 are Cytoplasmic-facing; it reads KCKCKFSQKPSHRPGDGPPLITPGSAHNC. The interval 66 to 88 is disordered; it reads SQKPSHRPGDGPPLITPGSAHNC.

It belongs to the FXYD family. Regulatory subunit of the sodium/potassium-transporting ATPase which is composed of a catalytic alpha subunit, a non-catalytic beta subunit and an additional regulatory subunit. Interacts with catalytic alpha subunit ATP1A1. Also interacts with non-catalytic beta subunit ATP1B1. Interacts with the alpha1-beta1, alpha2-beta1 and alpha3-beta1 NKA isozymes. In terms of processing, glutathionylated.

It localises to the cell membrane. In terms of biological role, associates with and regulates the activity of the sodium/potassium-transporting ATPase (NKA) which transports Na(+) out of the cell and K(+) into the cell. Reduces glutathionylation of the NKA beta-1 subunit ATP1B1, thus reversing glutathionylation-mediated inhibition of ATP1B1. Induces a hyperpolarization-activated chloride current when expressed in Xenopus oocytes. The protein is FXYD domain-containing ion transport regulator 3 (Fxyd3) of Rattus norvegicus (Rat).